The following is a 304-amino-acid chain: Glutaminase (304 aa).

7 residues coordinate substrate: Ser-63, Asn-114, Glu-158, Asn-165, Tyr-189, Tyr-240, and Val-258.

This sequence belongs to the glutaminase family. Homotetramer.

The enzyme catalyses L-glutamine + H2O = L-glutamate + NH4(+). This Shewanella loihica (strain ATCC BAA-1088 / PV-4) protein is Glutaminase.